The following is a 536-amino-acid chain: Glucose-6-phosphate isomerase (536 aa).

Catalysis depends on Glu-345, which acts as the Proton donor. Catalysis depends on residues His-376 and Lys-505.

It belongs to the GPI family.

Its subcellular location is the cytoplasm. It carries out the reaction alpha-D-glucose 6-phosphate = beta-D-fructose 6-phosphate. Its pathway is carbohydrate biosynthesis; gluconeogenesis. It functions in the pathway carbohydrate degradation; glycolysis; D-glyceraldehyde 3-phosphate and glycerone phosphate from D-glucose: step 2/4. In terms of biological role, catalyzes the reversible isomerization of glucose-6-phosphate to fructose-6-phosphate. The sequence is that of Glucose-6-phosphate isomerase from Ruegeria sp. (strain TM1040) (Silicibacter sp.).